Here is a 346-residue protein sequence, read N- to C-terminus: tRNA N6-adenosine threonylcarbamoyltransferase (346 aa).

Fe cation-binding residues include His-110 and His-114. Residues 132–136 (LLSGG), Asp-165, Gly-178, and Asn-274 each bind substrate. Asp-298 provides a ligand contact to Fe cation.

It belongs to the KAE1 / TsaD family. Fe(2+) serves as cofactor.

Its subcellular location is the cytoplasm. It catalyses the reaction L-threonylcarbamoyladenylate + adenosine(37) in tRNA = N(6)-L-threonylcarbamoyladenosine(37) in tRNA + AMP + H(+). In terms of biological role, required for the formation of a threonylcarbamoyl group on adenosine at position 37 (t(6)A37) in tRNAs that read codons beginning with adenine. Is involved in the transfer of the threonylcarbamoyl moiety of threonylcarbamoyl-AMP (TC-AMP) to the N6 group of A37, together with TsaE and TsaB. TsaD likely plays a direct catalytic role in this reaction. In Borreliella burgdorferi (strain ATCC 35210 / DSM 4680 / CIP 102532 / B31) (Borrelia burgdorferi), this protein is tRNA N6-adenosine threonylcarbamoyltransferase.